The chain runs to 305 residues: Ankyrin repeat domain-containing protein 23 (305 aa).

A coiled-coil region spans residues 41–72 (QEAVAREKLKLEEEKKKKLERFNSTRFNLDNL). Over residues 83 to 92 (KKRLRHRVPP) the composition is skewed to basic residues. Positions 83 to 104 (KKRLRHRVPPRKPEPLVKPQSQ) are disordered. ANK repeat units lie at residues 143–172 (LHRTALHWACLKGHSQLVNKLLVAGATVDA), 176–205 (LDRTPVFWACRGGHLVILKQLLNQGARVNA), 209–238 (IGSTPLHVAVRTRHPDCLEHLIECGAHLNA), and 242–271 (EGDTALHEAVRHGSYKAMKLLLLYGAELGV). An interaction with TTN region spans residues 178 to 195 (RTPVFWACRGGHLVILKQ).

As to quaternary structure, interacts with titin/TTN and MYPN. As to expression, mainly expressed in heart, skeletal muscle and brown adipose tissues.

The protein resides in the nucleus. In terms of biological role, may be involved in the energy metabolism. Could be a molecular link between myofibrillar stretch-induced signaling pathways and muscle gene expression. In Homo sapiens (Human), this protein is Ankyrin repeat domain-containing protein 23 (ANKRD23).